The following is a 129-amino-acid chain: MSTKVENILEELKSLNLLEAAELVKQIEETFDVDASAASGGVMMAAPSSAPAASDVEEKTEFDVVLEEVPAPKKIAVLKVVRSLTGLGLKEAKDLVESAPKTLKEGASKDDAEAMKKQLEDAGATVGVK.

It belongs to the bacterial ribosomal protein bL12 family. In terms of assembly, homodimer. Part of the ribosomal stalk of the 50S ribosomal subunit. Forms a multimeric L10(L12)X complex, where L10 forms an elongated spine to which 2 to 4 L12 dimers bind in a sequential fashion. Binds GTP-bound translation factors.

It is found in the plastid. Its subcellular location is the chloroplast. Functionally, forms part of the ribosomal stalk which helps the ribosome interact with GTP-bound translation factors. Is thus essential for accurate translation. The sequence is that of Large ribosomal subunit protein bL12c from Porphyra purpurea (Red seaweed).